The primary structure comprises 60 residues: Metallothionein (60 aa).

Residues 1–28 (MDPCDCAKTGTCNCGTSCTCANCSCTKC) form a beta region. The a divalent metal cation site is built by Cys-4, Cys-6, Cys-12, Cys-14, Cys-18, Cys-20, Cys-23, Cys-25, Cys-28, Cys-32, Cys-33, Cys-35, Cys-36, Cys-40, Cys-43, Cys-47, Cys-49, Cys-54, Cys-58, and Cys-59. Residues 29-60 (KKSCCECCPSGCSKCASGCACKDKTCDTNCCQ) form an alpha region.

It belongs to the metallothionein superfamily. Type 1 family.

In terms of biological role, metallothioneins have a high content of cysteine residues that bind various heavy metals. This Gadus morhua (Atlantic cod) protein is Metallothionein (mt).